The primary structure comprises 933 residues: Protein translocase subunit SecA (933 aa).

ATP contacts are provided by residues Gln90, 108 to 112 (GEGKT), and Asp504. A disordered region spans residues 539–570 (GMGSNNRRPQGFGQDSKKKKWQPSADIFPTDL).

The protein belongs to the SecA family. In terms of assembly, monomer and homodimer. Part of the essential Sec protein translocation apparatus which comprises SecA, SecYEG and auxiliary proteins SecDF. Other proteins may also be involved.

Its subcellular location is the cell inner membrane. The protein resides in the cellular thylakoid membrane. It localises to the cytoplasm. The enzyme catalyses ATP + H2O + cellular proteinSide 1 = ADP + phosphate + cellular proteinSide 2.. Its function is as follows. Part of the Sec protein translocase complex. Interacts with the SecYEG preprotein conducting channel. Has a central role in coupling the hydrolysis of ATP to the transfer of proteins into and across the cell membrane, serving as an ATP-driven molecular motor driving the stepwise translocation of polypeptide chains across the membrane. In terms of biological role, probably participates in protein translocation into and across both the cytoplasmic and thylakoid membranes in cyanobacterial cells. In Crocosphaera subtropica (strain ATCC 51142 / BH68) (Cyanothece sp. (strain ATCC 51142)), this protein is Protein translocase subunit SecA.